A 152-amino-acid chain; its full sequence is ARL14 effector protein-like (152 aa).

Over residues 1–16 (MTEPSQKNNSTQQELT) the composition is skewed to polar residues. Positions 1–27 (MTEPSQKNNSTQQELTNHLFPEKSSQI) are disordered.

The chain is ARL14 effector protein-like (Arl14epl) from Mus musculus (Mouse).